Reading from the N-terminus, the 256-residue chain is Type III pantothenate kinase (256 aa).

Position 6-13 (6-13 (DCGNTNTV)) interacts with ATP. 107 to 110 (GPDR) lines the substrate pocket. The active-site Proton acceptor is the Asp109. Asp129 serves as a coordination point for K(+). Thr132 is an ATP binding site. Thr184 provides a ligand contact to substrate.

This sequence belongs to the type III pantothenate kinase family. Homodimer. NH4(+) is required as a cofactor. Requires K(+) as cofactor.

The protein resides in the cytoplasm. It carries out the reaction (R)-pantothenate + ATP = (R)-4'-phosphopantothenate + ADP + H(+). It participates in cofactor biosynthesis; coenzyme A biosynthesis; CoA from (R)-pantothenate: step 1/5. In terms of biological role, catalyzes the phosphorylation of pantothenate (Pan), the first step in CoA biosynthesis. This is Type III pantothenate kinase from Dinoroseobacter shibae (strain DSM 16493 / NCIMB 14021 / DFL 12).